The following is a 424-amino-acid chain: Histidine--tRNA ligase (424 aa).

It belongs to the class-II aminoacyl-tRNA synthetase family. As to quaternary structure, homodimer.

It localises to the cytoplasm. It carries out the reaction tRNA(His) + L-histidine + ATP = L-histidyl-tRNA(His) + AMP + diphosphate + H(+). In Salmonella arizonae (strain ATCC BAA-731 / CDC346-86 / RSK2980), this protein is Histidine--tRNA ligase.